We begin with the raw amino-acid sequence, 185 residues long: Ribosome-recycling factor (185 aa).

Belongs to the RRF family.

The protein localises to the cytoplasm. Its function is as follows. Responsible for the release of ribosomes from messenger RNA at the termination of protein biosynthesis. May increase the efficiency of translation by recycling ribosomes from one round of translation to another. This Exiguobacterium sibiricum (strain DSM 17290 / CCUG 55495 / CIP 109462 / JCM 13490 / 255-15) protein is Ribosome-recycling factor.